We begin with the raw amino-acid sequence, 37 residues long: Large ribosomal subunit protein bL36 (37 aa).

The protein belongs to the bacterial ribosomal protein bL36 family.

This is Large ribosomal subunit protein bL36 from Sulfurimonas denitrificans (strain ATCC 33889 / DSM 1251) (Thiomicrospira denitrificans (strain ATCC 33889 / DSM 1251)).